Here is a 469-residue protein sequence, read N- to C-terminus: GDP-fucose protein O-fucosyltransferase 2 (469 aa).

The signal sequence occupies residues 1–18 (MKFIIVLLLFFFFKVIDR). GDP-beta-L-fucose-binding positions include 56–60 (GEGFN), 277–279 (HLR), and 373–374 (RF). Residue E57 is the Proton acceptor of the active site.

Belongs to the glycosyltransferase 68 family.

It is found in the endoplasmic reticulum. It carries out the reaction L-seryl-[protein] + GDP-beta-L-fucose = 3-O-(alpha-L-fucosyl)-L-seryl-[protein] + GDP + H(+). The catalysed reaction is L-threonyl-[protein] + GDP-beta-L-fucose = 3-O-(alpha-L-fucosyl)-L-threonyl-[protein] + GDP + H(+). It participates in protein modification; protein glycosylation. Catalyzes the reaction that attaches fucose through an O-glycosidic linkage to a conserved serine or threonine residue in the consensus sequence C1-X-X-S/T-C2 of thrombospondin type I repeats (TSRs) where C1 and C2 are the first and second cysteines of the repeat, respectively. O-fucosylates sporozoite proteins CSP and TRAP. O-fucosylation regulates stability and intracellular trafficking of TRAP but not of CSP. Probably by regulating protein O-fucosylation, may play a role in parasite transmission to the mosquito vector and/or infection of the vertebrate host hepatocytes; however, POFUT2 involvement in transmission/infection is controversial. In Plasmodium falciparum (isolate NF54), this protein is GDP-fucose protein O-fucosyltransferase 2.